A 399-amino-acid chain; its full sequence is tRNA-specific 2-thiouridylase MnmA (399 aa).

Residues 7 to 14 (AMSGGVDS) and M33 contribute to the ATP site. Residue C128 is the Nucleophile of the active site. C128 and C224 are disulfide-bonded. G152 is a binding site for ATP. An interaction with tRNA region spans residues 174-176 (KDQ). C224 (cysteine persulfide intermediate) is an active-site residue. The interval 333–334 (RY) is interaction with tRNA.

It belongs to the MnmA/TRMU family.

Its subcellular location is the cytoplasm. The enzyme catalyses S-sulfanyl-L-cysteinyl-[protein] + uridine(34) in tRNA + AH2 + ATP = 2-thiouridine(34) in tRNA + L-cysteinyl-[protein] + A + AMP + diphosphate + H(+). In terms of biological role, catalyzes the 2-thiolation of uridine at the wobble position (U34) of tRNA, leading to the formation of s(2)U34. The protein is tRNA-specific 2-thiouridylase MnmA of Rhodopirellula baltica (strain DSM 10527 / NCIMB 13988 / SH1).